The sequence spans 108 residues: Peptidyl-prolyl cis-trans isomerase FKBP1A (108 aa).

A PPIase FKBP-type domain is found at 20–108; sequence GQTCVVHYTG…VFDVELLKLE (89 aa). Lys53 bears the N6-acetyllysine; alternate mark. Lys53 bears the N6-succinyllysine; alternate mark.

It belongs to the FKBP-type PPIase family. FKBP1 subfamily. In terms of assembly, interacts with TGFBR1; prevents TGFBR1 phosphorylation by TGFBR2 and stabilizes it in the inactive conformation. Interacts with ACVR1B and SMAD7. Identified in a complex composed of RYR1, PDE4D, PKA, FKBP1A and protein phosphatase 1 (PP1). Interacts directly with RYR2 and RYR3. Interacts directly with RYR1. Interacts with GLMN; rapamycin and FK506 abolish the interaction with GLMN in a dose dependent manner.

The protein localises to the cytoplasm. It localises to the cytosol. It is found in the sarcoplasmic reticulum membrane. The catalysed reaction is [protein]-peptidylproline (omega=180) = [protein]-peptidylproline (omega=0). Its activity is regulated as follows. Inhibited by both FK506 and rapamycin. Keeps in an inactive conformation TGFBR1, the TGF-beta type I serine/threonine kinase receptor, preventing TGF-beta receptor activation in absence of ligand. Recruits SMAD7 to ACVR1B which prevents the association of SMAD2 and SMAD3 with the activin receptor complex, thereby blocking the activin signal. May modulate the RYR1 calcium channel activity. PPIases accelerate the folding of proteins. It catalyzes the cis-trans isomerization of proline imidic peptide bonds in oligopeptides. In Mus musculus (Mouse), this protein is Peptidyl-prolyl cis-trans isomerase FKBP1A (Fkbp1a).